A 340-amino-acid polypeptide reads, in one-letter code: MNIDISNLKVQCMGEIANVKNLKELEEFQIKYLGKKGIVKNMLKELSTLPSDKRAQAGRQLNELRDFIESQINELRKKFEEEEKQKRIQKERIDVTIPGKRVEVGAIHILSQVQKEISEIFLSMGYEIAEGPEVELDYYNFEALNIPADHPARDTQDTFYISDDVLLRTHTSPVQIRVMKSKKPPIKIISPGRVYRSDEVDATHSPIFHQIEGLFVDKGVTMADLKGTLEVFAKRFFGEETRVRFRPHHFPFTEPSAEVDISCIFCGGKGCKTCKGEGWIEILGAGMVHRKVLANCDIDPDEYTGFAFGMGVERIALLKYEIEDIRLFYENDLRFLKQFR.

Mg(2+) is bound at residue glutamate 254.

It belongs to the class-II aminoacyl-tRNA synthetase family. Phe-tRNA synthetase alpha subunit type 1 subfamily. In terms of assembly, tetramer of two alpha and two beta subunits. Mg(2+) serves as cofactor.

It is found in the cytoplasm. The catalysed reaction is tRNA(Phe) + L-phenylalanine + ATP = L-phenylalanyl-tRNA(Phe) + AMP + diphosphate + H(+). The chain is Phenylalanine--tRNA ligase alpha subunit from Caldicellulosiruptor saccharolyticus (strain ATCC 43494 / DSM 8903 / Tp8T 6331).